The chain runs to 162 residues: MIIFGVDPGFGILGYGVLSVSGNSFQHVSHGTIQTEKQQNIALRLKVLYEELSNVIDNFKPSEIAMEKLFFSRNITTAISVGEARGIVLLLAAQRNIPVFEYTPHEIKKAVTGSGKASKKDVQQMIKILLNLKELPKPDDAADGLAIAWCHCAVRNITRRFS.

Catalysis depends on residues Asp7, Glu67, and Asp140. Residues Asp7, Glu67, and Asp140 each contribute to the Mg(2+) site.

The protein belongs to the RuvC family. In terms of assembly, homodimer which binds Holliday junction (HJ) DNA. The HJ becomes 2-fold symmetrical on binding to RuvC with unstacked arms; it has a different conformation from HJ DNA in complex with RuvA. In the full resolvosome a probable DNA-RuvA(4)-RuvB(12)-RuvC(2) complex forms which resolves the HJ. It depends on Mg(2+) as a cofactor.

It localises to the cytoplasm. It catalyses the reaction Endonucleolytic cleavage at a junction such as a reciprocal single-stranded crossover between two homologous DNA duplexes (Holliday junction).. Its function is as follows. The RuvA-RuvB-RuvC complex processes Holliday junction (HJ) DNA during genetic recombination and DNA repair. Endonuclease that resolves HJ intermediates. Cleaves cruciform DNA by making single-stranded nicks across the HJ at symmetrical positions within the homologous arms, yielding a 5'-phosphate and a 3'-hydroxyl group; requires a central core of homology in the junction. The consensus cleavage sequence is 5'-(A/T)TT(C/G)-3'. Cleavage occurs on the 3'-side of the TT dinucleotide at the point of strand exchange. HJ branch migration catalyzed by RuvA-RuvB allows RuvC to scan DNA until it finds its consensus sequence, where it cleaves and resolves the cruciform DNA. This chain is Crossover junction endodeoxyribonuclease RuvC, found in Pseudothermotoga lettingae (strain ATCC BAA-301 / DSM 14385 / NBRC 107922 / TMO) (Thermotoga lettingae).